A 585-amino-acid polypeptide reads, in one-letter code: MRKTKIVCTIGPASESEEMIEKLINAGMNVARLNFSHGSHEEHKGRIDTIRKVAKRLDKIVAILLDTKGPEIRTHNMKDGIIELERGNEVIVSMNEVEGTPEKFSVTYENLINDVQVGSYILLDDGLIELQVKDIDHAKKEVKCDILNSGELKNKKGVNLPGVRVSLPGITEKDAEDIRFGIKENVDFIAASFVRRPSDVLEIREILEEQKANISVFPKIENQEGIDNIEEILEVSDGLMVARGDMGVEIPPEKVPMVQKDLIRQCNKLGKPVITATQMLDSMQRNPRATRAEASDVANAIYDGTDAVMLSGETAAGLYPEEAVKTMRNIAVSAEAAQDYKKLLSDRTKLVETSLVNAIGISVAHTALNLNVKAIVAATESGSTARTISKYRPHSDIIAVTPSEETARQCSIVWGVQPVVKKGRKSTDALLNNAVATAVETGRVTNGDLIIITAGVPTGETGTTNMMKIHLVGDEIANGQGIGRGSVVGTTLVAETVKDLEGKDLSDKVIVTNSIDETFVPYVEKALGLITEENGITSPSAIVGLEKGIPTVVGVEKAVKNISNNVLVTIDAAQGKIFEGYANVL.

Arginine 32 contributes to the substrate binding site. Residues asparagine 34, serine 36, aspartate 66, and threonine 67 each coordinate K(+). Asparagine 34–histidine 37 is a binding site for ATP. Residues arginine 73 and lysine 156 each coordinate ATP. Glutamate 221 contributes to the Mg(2+) binding site. Substrate contacts are provided by glycine 244, aspartate 245, and threonine 277. Aspartate 245 is a Mg(2+) binding site.

It belongs to the pyruvate kinase family. This sequence in the C-terminal section; belongs to the PEP-utilizing enzyme family. Mg(2+) is required as a cofactor. It depends on K(+) as a cofactor.

The enzyme catalyses pyruvate + ATP = phosphoenolpyruvate + ADP + H(+). It functions in the pathway carbohydrate degradation; glycolysis; pyruvate from D-glyceraldehyde 3-phosphate: step 5/5. This Staphylococcus aureus (strain MRSA252) protein is Pyruvate kinase (pyk).